Reading from the N-terminus, the 395-residue chain is MNQTWRAHLQSKLQQLHKQGQYRNLYVTEQAEETWLIRDKKRMLNLASNNYLGLAGDERLKEAAIACTKRYGTGATASRLVVGNHPLYEEVERSICDWKGTERALIVNSGYTANIGAISSLASRHDIVFSDKLNHASIVDGIILSGAEHKRYRHNDLDHLEKLLKMASPEKRKLIVTDTVFSMDGDTAYLRDLVQLKEKYGAIIIVDEAHASGIYGIGGAGLSHIEKNLSQKIDIHMGTFSKALGCYGAYLTGDEIYIEYLQNMMRSFIFTTALPPSTLGAVQKAIEIVKEDNERRENLIANGEYFRTKLRDAGFDIGNSSTHIVPIVVGSNEHALRFSKRLQEAGIAAIAIRPPTVPVHSSRIRFAVTSQHTIADLKWAIDRIIHIAKEEEIFV.

Arginine 23 is a binding site for substrate. 110–111 (GY) is a binding site for pyridoxal 5'-phosphate. Substrate is bound at residue histidine 135. Residues serine 182, 207–210 (DEAH), and 239–242 (TFSK) contribute to the pyridoxal 5'-phosphate site. Lysine 242 carries the post-translational modification N6-(pyridoxal phosphate)lysine. A substrate-binding site is contributed by threonine 356.

The protein belongs to the class-II pyridoxal-phosphate-dependent aminotransferase family. BioF subfamily. As to quaternary structure, homodimer. The cofactor is pyridoxal 5'-phosphate.

The enzyme catalyses 6-carboxyhexanoyl-[ACP] + L-alanine + H(+) = (8S)-8-amino-7-oxononanoate + holo-[ACP] + CO2. The protein operates within cofactor biosynthesis; biotin biosynthesis. Functionally, catalyzes the decarboxylative condensation of pimeloyl-[acyl-carrier protein] and L-alanine to produce 8-amino-7-oxononanoate (AON), [acyl-carrier protein], and carbon dioxide. The sequence is that of Putative 8-amino-7-oxononanoate synthase (bioF) from Bacillus cereus (strain G9842).